Consider the following 462-residue polypeptide: NEDD8-activating enzyme E1 catalytic subunit (462 aa).

Alanine 2 carries the post-translational modification N-acetylalanine. The tract at residues 53-70 is interaction with UBE2M N-terminus; the sequence is HPDFEPSTESLQFLLDTC. ATP is bound by residues 100 to 124 and 148 to 171; these read DMDT…GRPK and IQDF…SIIA. Interaction with UBE2M N-terminus regions lie at residues 157–161 and 192–217; these read RQFHI and PSSI…LPGM. Residues 227-229 are interaction with NEDD8; sequence LYP. The active-site Glycyl thioester intermediate is the cysteine 237. 2 interaction with NAE1 regions span residues 242-248 and 292-295; these read MPRLPEH and YNIR. Residues 331–338 form an interaction with UBE2M N-terminus region; the sequence is IATSAYIP. Residues 352-357 are interaction with NEDD8; that stretch reads YTYTFE. The tract at residues 368–462 is interaction with UBE2M core domain; that stretch reads SQLPQNIQFS…QTVLFKLHFT (95 aa).

This sequence belongs to the ubiquitin-activating E1 family. UBA3 subfamily. Heterodimer of UBA3 and NAE1. Interacts with NEDD8, UBE2F and UBE2M. Binds ESR1 and ESR2 with bound steroid ligand. Interacts with TBATA.

The catalysed reaction is ATP + [NEDD8 protein] + [E1 NEDD8-activating enzyme]-L-cysteine = AMP + diphosphate + [E1 NEDD8-activating enzyme]-S-[NEDD8 protein]-yl-L-cysteine.. Its pathway is protein modification; protein neddylation. Its activity is regulated as follows. Binding of TP53BP2 to the regulatory subunit NAE1 decreases activity. In terms of biological role, catalytic subunit of the dimeric UBA3-NAE1 E1 enzyme. E1 activates NEDD8 by first adenylating its C-terminal glycine residue with ATP, thereafter linking this residue to the side chain of the catalytic cysteine, yielding a NEDD8-UBA3 thioester and free AMP. E1 finally transfers NEDD8 to the catalytic cysteine of UBE2M. Down-regulates steroid receptor activity. Necessary for cell cycle progression. The protein is NEDD8-activating enzyme E1 catalytic subunit (Uba3) of Mus musculus (Mouse).